The following is a 179-amino-acid chain: Large ribosomal subunit protein uL5 (179 aa).

Belongs to the universal ribosomal protein uL5 family. In terms of assembly, part of the 50S ribosomal subunit; part of the 5S rRNA/L5/L18/L25 subcomplex. Contacts the 5S rRNA and the P site tRNA. Forms a bridge to the 30S subunit in the 70S ribosome.

In terms of biological role, this is one of the proteins that bind and probably mediate the attachment of the 5S RNA into the large ribosomal subunit, where it forms part of the central protuberance. In the 70S ribosome it contacts protein S13 of the 30S subunit (bridge B1b), connecting the 2 subunits; this bridge is implicated in subunit movement. Contacts the P site tRNA; the 5S rRNA and some of its associated proteins might help stabilize positioning of ribosome-bound tRNAs. The protein is Large ribosomal subunit protein uL5 of Actinobacillus pleuropneumoniae serotype 5b (strain L20).